Here is a 353-residue protein sequence, read N- to C-terminus: 41 kDa protein (353 aa).

The segment at 132–197 (QSSHASALEQ…DNNSSDTIKD (66 aa)) is disordered. Over residues 157 to 169 (LDNKGKSDSENCN) the composition is skewed to basic and acidic residues.

The polypeptide is 41 kDa protein (Lactobacillus helveticus (Lactobacillus suntoryeus)).